Reading from the N-terminus, the 299-residue chain is Ribonuclease Z (299 aa).

Residues histidine 60, histidine 62, aspartate 64, histidine 65, histidine 137, aspartate 207, and histidine 265 each contribute to the Zn(2+) site. The Proton acceptor role is filled by aspartate 64.

It belongs to the RNase Z family. As to quaternary structure, homodimer. It depends on Zn(2+) as a cofactor.

The enzyme catalyses Endonucleolytic cleavage of RNA, removing extra 3' nucleotides from tRNA precursor, generating 3' termini of tRNAs. A 3'-hydroxy group is left at the tRNA terminus and a 5'-phosphoryl group is left at the trailer molecule.. Its function is as follows. Zinc phosphodiesterase, which displays some tRNA 3'-processing endonuclease activity. Probably involved in tRNA maturation, by removing a 3'-trailer from precursor tRNA. The protein is Ribonuclease Z of Nitrosopumilus maritimus (strain SCM1).